Consider the following 292-residue polypeptide: GTP cyclohydrolase FolE2 (292 aa).

It belongs to the GTP cyclohydrolase IV family.

It catalyses the reaction GTP + H2O = 7,8-dihydroneopterin 3'-triphosphate + formate + H(+). The protein operates within cofactor biosynthesis; 7,8-dihydroneopterin triphosphate biosynthesis; 7,8-dihydroneopterin triphosphate from GTP: step 1/1. Converts GTP to 7,8-dihydroneopterin triphosphate. The protein is GTP cyclohydrolase FolE2 of Staphylococcus haemolyticus (strain JCSC1435).